A 318-amino-acid polypeptide reads, in one-letter code: NADH-ubiquinone oxidoreductase chain 1 (318 aa).

The next 8 helical transmembrane spans lie at 2–22 (FTIN…FLTL), 70–90 (MFII…VPLP), 100–120 (LGVL…LWSG), 146–166 (LAII…STLI), 171–191 (HLWL…STLA), 222–242 (LFFM…TILF), 253–273 (ELYT…FLWI), and 294–314 (LPLT…MSSI).

The protein belongs to the complex I subunit 1 family.

Its subcellular location is the mitochondrion inner membrane. The enzyme catalyses a ubiquinone + NADH + 5 H(+)(in) = a ubiquinol + NAD(+) + 4 H(+)(out). Functionally, core subunit of the mitochondrial membrane respiratory chain NADH dehydrogenase (Complex I) that is believed to belong to the minimal assembly required for catalysis. Complex I functions in the transfer of electrons from NADH to the respiratory chain. The immediate electron acceptor for the enzyme is believed to be ubiquinone. The polypeptide is NADH-ubiquinone oxidoreductase chain 1 (MT-ND1) (Rhinoceros unicornis (Greater Indian rhinoceros)).